Reading from the N-terminus, the 343-residue chain is Type II restriction enzyme BsuMI component YdiS (343 aa).

As to quaternary structure, bsuMI restriction activity requires YdiR, YdiS and YdjA.

It catalyses the reaction Endonucleolytic cleavage of DNA to give specific double-stranded fragments with terminal 5'-phosphates.. A P subtype restriction enzyme that recognizes the double-stranded sequence 5'-CTCGAG-3'; the cleavage site is unknown. This is Type II restriction enzyme BsuMI component YdiS (ydiS) from Bacillus subtilis (strain 168).